We begin with the raw amino-acid sequence, 58 residues long: MAVPKRKTSKSNTKMRRAANSKMEATGFVSCPQCHEPKLPHRVCPDCGYYKGKEVVSK.

A compositionally biased stretch (basic residues) spans M1–A19. The tract at residues M1 to K22 is disordered.

Belongs to the bacterial ribosomal protein bL32 family.

This Clostridioides difficile (strain 630) (Peptoclostridium difficile) protein is Large ribosomal subunit protein bL32.